An 829-amino-acid polypeptide reads, in one-letter code: Periplasmic nitrate reductase (829 aa).

Residues M1 to A29 constitute a signal peptide (tat-type signal). The 4Fe-4S Mo/W bis-MGD-type domain maps to I41–D97. [4Fe-4S] cluster contacts are provided by C48, C51, C55, and C83. Residues K85, Q152, N177, C181, W214–M221, S245–H249, Q264–D266, M374, Q378, N484, S510–D511, K533, D560, and T718–T727 each bind Mo-bis(molybdopterin guanine dinucleotide). F794 serves as a coordination point for substrate. 2 residues coordinate Mo-bis(molybdopterin guanine dinucleotide): N802 and K819.

Belongs to the prokaryotic molybdopterin-containing oxidoreductase family. NasA/NapA/NarB subfamily. Component of the periplasmic nitrate reductase NapAB complex composed of NapA and NapB. [4Fe-4S] cluster is required as a cofactor. The cofactor is Mo-bis(molybdopterin guanine dinucleotide). Predicted to be exported by the Tat system. The position of the signal peptide cleavage has not been experimentally proven.

The protein resides in the periplasm. It catalyses the reaction 2 Fe(II)-[cytochrome] + nitrate + 2 H(+) = 2 Fe(III)-[cytochrome] + nitrite + H2O. In terms of biological role, catalytic subunit of the periplasmic nitrate reductase complex NapAB. Receives electrons from NapB and catalyzes the reduction of nitrate to nitrite. The protein is Periplasmic nitrate reductase of Vibrio campbellii (strain ATCC BAA-1116).